A 617-amino-acid chain; its full sequence is AUGMIN subunit 3 (617 aa).

Coiled coils occupy residues 107 to 140, 314 to 334, and 481 to 504; these read DATL…SSAL, LHSL…LYQK, and AIIQ…ENSL.

The protein belongs to the HAUS3 family. As to quaternary structure, part of the augmin complex composed of 8 subunits. The complex acts on microtubules and interacts with gamma-tubulin in spindles and the phragmoplast. Interacts with AUG1.

The protein localises to the cytoplasm. The protein resides in the cytoskeleton. It localises to the spindle. It is found in the phragmoplast. In terms of biological role, involved in microtubules reorganization during spindle and phragmoplast development. Required for gamma-tubulin localization during mitosis. This chain is AUGMIN subunit 3, found in Arabidopsis thaliana (Mouse-ear cress).